Reading from the N-terminus, the 663-residue chain is DNA ligase (663 aa).

NAD(+)-binding positions include 31-35 (DSEYD), 80-81 (SL), and Glu109. The N6-AMP-lysine intermediate role is filled by Lys111. The NAD(+) site is built by Arg132, Glu166, Lys282, and Lys306. Cys400, Cys403, Cys418, and Cys423 together coordinate Zn(2+). In terms of domain architecture, BRCT spans 585–663 (ELHPVFGEKT…EQMMVDALRN (79 aa)).

This sequence belongs to the NAD-dependent DNA ligase family. LigA subfamily. Mg(2+) is required as a cofactor. Requires Mn(2+) as cofactor.

The catalysed reaction is NAD(+) + (deoxyribonucleotide)n-3'-hydroxyl + 5'-phospho-(deoxyribonucleotide)m = (deoxyribonucleotide)n+m + AMP + beta-nicotinamide D-nucleotide.. Functionally, DNA ligase that catalyzes the formation of phosphodiester linkages between 5'-phosphoryl and 3'-hydroxyl groups in double-stranded DNA using NAD as a coenzyme and as the energy source for the reaction. It is essential for DNA replication and repair of damaged DNA. This chain is DNA ligase, found in Macrococcus caseolyticus (strain JCSC5402) (Macrococcoides caseolyticum).